The chain runs to 197 residues: Dephospho-CoA kinase (197 aa).

One can recognise a DPCK domain in the interval 2-197; that stretch reads IVGLTGGIAS…YQQILSLNAA (196 aa). 10–15 contributes to the ATP binding site; the sequence is ASGKTL.

It belongs to the CoaE family.

It is found in the cytoplasm. The enzyme catalyses 3'-dephospho-CoA + ATP = ADP + CoA + H(+). The protein operates within cofactor biosynthesis; coenzyme A biosynthesis; CoA from (R)-pantothenate: step 5/5. Functionally, catalyzes the phosphorylation of the 3'-hydroxyl group of dephosphocoenzyme A to form coenzyme A. The sequence is that of Dephospho-CoA kinase from Dichelobacter nodosus (Bacteroides nodosus).